We begin with the raw amino-acid sequence, 262 residues long: Hydroxyethylthiazole kinase (262 aa).

M43 contacts substrate. R118 and T164 together coordinate ATP. A191 contributes to the substrate binding site.

This sequence belongs to the Thz kinase family. Mg(2+) is required as a cofactor.

It catalyses the reaction 5-(2-hydroxyethyl)-4-methylthiazole + ATP = 4-methyl-5-(2-phosphooxyethyl)-thiazole + ADP + H(+). It functions in the pathway cofactor biosynthesis; thiamine diphosphate biosynthesis; 4-methyl-5-(2-phosphoethyl)-thiazole from 5-(2-hydroxyethyl)-4-methylthiazole: step 1/1. Functionally, catalyzes the phosphorylation of the hydroxyl group of 4-methyl-5-beta-hydroxyethylthiazole (THZ). This Cereibacter sphaeroides (strain ATCC 17025 / ATH 2.4.3) (Rhodobacter sphaeroides) protein is Hydroxyethylthiazole kinase.